A 295-amino-acid polypeptide reads, in one-letter code: Ribosomal RNA small subunit methyltransferase A (295 aa).

Positions 25, 27, 52, 73, 98, and 120 each coordinate S-adenosyl-L-methionine.

Belongs to the class I-like SAM-binding methyltransferase superfamily. rRNA adenine N(6)-methyltransferase family. RsmA subfamily.

Its subcellular location is the cytoplasm. It catalyses the reaction adenosine(1518)/adenosine(1519) in 16S rRNA + 4 S-adenosyl-L-methionine = N(6)-dimethyladenosine(1518)/N(6)-dimethyladenosine(1519) in 16S rRNA + 4 S-adenosyl-L-homocysteine + 4 H(+). In terms of biological role, specifically dimethylates two adjacent adenosines (A1518 and A1519) in the loop of a conserved hairpin near the 3'-end of 16S rRNA in the 30S particle. May play a critical role in biogenesis of 30S subunits. This chain is Ribosomal RNA small subunit methyltransferase A, found in Desulfotalea psychrophila (strain LSv54 / DSM 12343).